Consider the following 435-residue polypeptide: Xylose isomerase (435 aa).

Residues H100 and D103 contribute to the active site. E231, E267, H270, D295, D306, D308, and D338 together coordinate Mg(2+).

It belongs to the xylose isomerase family. Homotetramer. The cofactor is Mg(2+).

It is found in the cytoplasm. It carries out the reaction alpha-D-xylose = alpha-D-xylulofuranose. This chain is Xylose isomerase, found in Brucella ovis (strain ATCC 25840 / 63/290 / NCTC 10512).